The following is a 307-amino-acid chain: Heme A synthase (307 aa).

Topologically, residues 1–8 (MQHNRYLK) are cytoplasmic. Residues 9–29 (WFAVAATVGMLLILLGGALVT) form a helical membrane-spanning segment. Over 30 to 56 (KTDSGLGCGRNWPDCNGSLIPKEITPE) the chain is Extracellular. A disulfide bridge links cysteine 37 with cysteine 44. The helical transmembrane segment at 57 to 77 (VLIEFSHRLVTGVVSISILVL) threads the bilayer. Glutamate 60 is an active-site residue. Histidine 63 contacts heme o. Residues 78–92 (TVWTWRKLGHIREVK) lie on the Cytoplasmic side of the membrane. The helical transmembrane segment at 93–113 (LLGFLAMFFLIAQALIGAAQV) threads the bilayer. Over 114-123 (LWGQGDFILA) the chain is Extracellular. A helical transmembrane segment spans residues 124 to 144 (LHFGISLISFAAVLLLSMIVF). Histidine 125 contacts heme o. The Cytoplasmic portion of the chain corresponds to 145–161 (EVDRKFDADNVFIGKKL). A helical membrane pass occupies residues 162-182 (RWHTIAVTIYSYLVVYTGALV). Residues 183 to 218 (RHTDSSLICPDWPFCYNETPLASPNNMYEWVQMGHR) are Extracellular-facing. A disulfide bridge links cysteine 191 with cysteine 197. Residue histidine 217 participates in heme b binding. Residues 219–239 (LAVLIIFIWIAYITWHAVKEY) form a helical membrane-spanning segment. The Cytoplasmic segment spans residues 240 to 247 (KNQRVVYY). The chain crosses the membrane as a helical span at residues 248-268 (GWIIAFTIVFLQVIAGMLVVL). At 269 to 276 (TKLNLTVA) the chain is on the extracellular side. The helical transmembrane segment at 277-297 (LMHSLLISLLFGLLCYMIMLV) threads the bilayer. Heme b is bound at residue histidine 279. Residues 298-307 (ARSNYNEKMK) lie on the Cytoplasmic side of the membrane.

The protein belongs to the COX15/CtaA family. Type 1 subfamily. In terms of assembly, interacts with CtaB. Heme b is required as a cofactor.

The protein resides in the cell membrane. The enzyme catalyses Fe(II)-heme o + 2 A + H2O = Fe(II)-heme a + 2 AH2. The protein operates within porphyrin-containing compound metabolism; heme A biosynthesis; heme A from heme O: step 1/1. In terms of biological role, catalyzes the conversion of heme O to heme A by two successive hydroxylations of the methyl group at C8. The first hydroxylation forms heme I, the second hydroxylation results in an unstable dihydroxymethyl group, which spontaneously dehydrates, resulting in the formyl group of heme A. The polypeptide is Heme A synthase (Lysinibacillus sphaericus (strain C3-41)).